Consider the following 97-residue polypeptide: YcgL domain-containing protein Pfl01_1389 (97 aa).

The YcgL domain occupies 3 to 87; that stretch reads RICSIYQSSK…AEEEYIEHLP (85 aa).

The sequence is that of YcgL domain-containing protein Pfl01_1389 from Pseudomonas fluorescens (strain Pf0-1).